The following is a 330-amino-acid chain: Anthranilate phosphoribosyltransferase (330 aa).

5-phospho-alpha-D-ribose 1-diphosphate contacts are provided by residues Gly-75, 78–79 (GD), Thr-83, 85–88 (NVST), 103–111 (KHGNRAASS), and Ala-115. Gly-75 is a binding site for anthranilate. Ser-87 is a Mg(2+) binding site. Asn-106 contacts anthranilate. Arg-161 contributes to the anthranilate binding site. Residues Asp-220 and Glu-221 each contribute to the Mg(2+) site.

It belongs to the anthranilate phosphoribosyltransferase family. As to quaternary structure, homodimer. Mg(2+) is required as a cofactor.

It catalyses the reaction N-(5-phospho-beta-D-ribosyl)anthranilate + diphosphate = 5-phospho-alpha-D-ribose 1-diphosphate + anthranilate. It functions in the pathway amino-acid biosynthesis; L-tryptophan biosynthesis; L-tryptophan from chorismate: step 2/5. Its function is as follows. Catalyzes the transfer of the phosphoribosyl group of 5-phosphorylribose-1-pyrophosphate (PRPP) to anthranilate to yield N-(5'-phosphoribosyl)-anthranilate (PRA). The polypeptide is Anthranilate phosphoribosyltransferase (Erythrobacter litoralis (strain HTCC2594)).